The chain runs to 631 residues: Transmembrane and coiled-coil domain-containing protein 4 (631 aa).

Positions 1-27 are disordered; it reads MATWNRPHPRQPVAPEPAAEDDSQQPL. Residues 156–183 are a coiled coil; it reads FLESLKDAKEEESETAEASRKRKEKRRK. Helical transmembrane passes span 200–220, 228–248, and 343–363; these read VIGV…ATII, LGSV…GAGL, and LSGI…ANVI. The tract at residues 555 to 595 is disordered; it reads DGQSQGPASEDSLKTTIPSSASQAQMPAGLNQSTEDSLSTA. Positions 568 to 594 are enriched in polar residues; it reads KTTIPSSASQAQMPAGLNQSTEDSLST.

This sequence belongs to the TMCO4 family.

The protein localises to the membrane. In Mus musculus (Mouse), this protein is Transmembrane and coiled-coil domain-containing protein 4 (Tmco4).